The sequence spans 468 residues: UDP-N-acetylmuramate--L-alanine ligase (468 aa).

116-122 (GTHGKTT) provides a ligand contact to ATP.

This sequence belongs to the MurCDEF family.

Its subcellular location is the cytoplasm. The catalysed reaction is UDP-N-acetyl-alpha-D-muramate + L-alanine + ATP = UDP-N-acetyl-alpha-D-muramoyl-L-alanine + ADP + phosphate + H(+). It functions in the pathway cell wall biogenesis; peptidoglycan biosynthesis. In terms of biological role, cell wall formation. The sequence is that of UDP-N-acetylmuramate--L-alanine ligase from Fusobacterium nucleatum subsp. nucleatum (strain ATCC 25586 / DSM 15643 / BCRC 10681 / CIP 101130 / JCM 8532 / KCTC 2640 / LMG 13131 / VPI 4355).